The following is a 427-amino-acid chain: Serine--tRNA ligase (427 aa).

Threonine 231 to glutamate 233 is a binding site for L-serine. Arginine 262 to glutamate 264 is an ATP binding site. An L-serine-binding site is contributed by glutamate 285. Glutamate 349 to serine 352 serves as a coordination point for ATP. Serine 385 serves as a coordination point for L-serine.

Belongs to the class-II aminoacyl-tRNA synthetase family. Type-1 seryl-tRNA synthetase subfamily. Homodimer. The tRNA molecule binds across the dimer.

It localises to the cytoplasm. It catalyses the reaction tRNA(Ser) + L-serine + ATP = L-seryl-tRNA(Ser) + AMP + diphosphate + H(+). It carries out the reaction tRNA(Sec) + L-serine + ATP = L-seryl-tRNA(Sec) + AMP + diphosphate + H(+). The protein operates within aminoacyl-tRNA biosynthesis; selenocysteinyl-tRNA(Sec) biosynthesis; L-seryl-tRNA(Sec) from L-serine and tRNA(Sec): step 1/1. Functionally, catalyzes the attachment of serine to tRNA(Ser). Is also able to aminoacylate tRNA(Sec) with serine, to form the misacylated tRNA L-seryl-tRNA(Sec), which will be further converted into selenocysteinyl-tRNA(Sec). In Rhizobium rhizogenes (strain K84 / ATCC BAA-868) (Agrobacterium radiobacter), this protein is Serine--tRNA ligase.